The chain runs to 347 residues: uncharacterized protein (347 aa).

10 helical membrane-spanning segments follow: residues Gly-6–Thr-26, Phe-37–Ala-57, Phe-90–Phe-110, Leu-114–Thr-134, Ile-140–Ala-160, Trp-182–Val-202, Gly-217–Ser-237, Leu-262–Gly-282, Ser-289–Thr-309, and Leu-317–Leu-337.

The protein resides in the cell membrane. This is an uncharacterized protein from Bacillus subtilis (strain 168).